Here is an 87-residue protein sequence, read N- to C-terminus: Mitotic-spindle organizing protein 1 (87 aa).

It belongs to the MOZART1 family. In terms of assembly, part of the gamma-tubulin complex.

The protein localises to the cytoplasm. It is found in the cytoskeleton. It localises to the microtubule organizing center. Its subcellular location is the spindle pole body. Its function is as follows. Required for gamma-tubulin complex recruitment to the microtubule organizing center (MTOC). The polypeptide is Mitotic-spindle organizing protein 1 (Chaetomium globosum (strain ATCC 6205 / CBS 148.51 / DSM 1962 / NBRC 6347 / NRRL 1970) (Soil fungus)).